The sequence spans 447 residues: Protein mab-21-like 4 (447 aa).

In Homo sapiens (Human), this protein is Protein mab-21-like 4.